The primary structure comprises 156 residues: 3-hydroxyacyl-[acyl-carrier-protein] dehydratase FabZ (156 aa).

The active site involves His50.

Belongs to the thioester dehydratase family. FabZ subfamily.

It localises to the cytoplasm. The enzyme catalyses a (3R)-hydroxyacyl-[ACP] = a (2E)-enoyl-[ACP] + H2O. Involved in unsaturated fatty acids biosynthesis. Catalyzes the dehydration of short chain beta-hydroxyacyl-ACPs and long chain saturated and unsaturated beta-hydroxyacyl-ACPs. The protein is 3-hydroxyacyl-[acyl-carrier-protein] dehydratase FabZ of Janthinobacterium sp. (strain Marseille) (Minibacterium massiliensis).